We begin with the raw amino-acid sequence, 475 residues long: Gamma-aminobutyric acid receptor subunit gamma-2 (475 aa).

A signal peptide spans 1–39; sequence MSSPNIWSTGSSVYSTPVFSQKMTVWILLLLSLYPGFTS. Residues 40–275 lie on the Extracellular side of the membrane; it reads QKSDDDYEDY…FDLSRRMGYF (236 aa). Residues asparagine 52 and asparagine 129 are each glycosylated (N-linked (GlcNAc...) asparagine). The cysteines at positions 190 and 204 are disulfide-linked. An N-linked (GlcNAc...) asparagine glycan is attached at asparagine 247. The helical transmembrane segment at 276 to 296 threads the bilayer; sequence TIQTYIPCTLIVVLSWVSFWI. The Cytoplasmic portion of the chain corresponds to 297 to 302; that stretch reads NKDAVP. A helical transmembrane segment spans residues 303-322; sequence ARTSLGITTVLTMTTLSTIA. Residues 323–334 lie on the Extracellular side of the membrane; that stretch reads RKSLPKVSYVTA. The chain crosses the membrane as a helical span at residues 335-359; that stretch reads MDLFVSVCFIFVFSALVEYGTLHYF. Residues 360 to 451 are Cytoplasmic-facing; the sequence is VSNRKPSKDK…IHIRIAKMDS (92 aa). Residues 433 to 450 form an interaction with GABARAP region; it reads RTGAWRHGRIHIRIAKMD. A helical membrane pass occupies residues 452-472; that stretch reads YARIFFPTAFCLFNLVYWVSY. The Extracellular segment spans residues 473-475; that stretch reads LYL.

Belongs to the ligand-gated ion channel (TC 1.A.9) family. Gamma-aminobutyric acid receptor (TC 1.A.9.5) subfamily. GABRG2 sub-subfamily. As to quaternary structure, heteropentamer, formed by a combination of alpha (GABRA1-6), beta (GABRB1-3), gamma (GABRG1-3), delta (GABRD), epsilon (GABRE), rho (GABRR1-3), pi (GABRP) and theta (GABRQ) chains, each subunit exhibiting distinct physiological and pharmacological properties. Interacts with GABARAP. Interacts with KIF21B. Identified in a complex of 720 kDa composed of LHFPL4, NLGN2, GABRA1, GABRB2, GABRG2 and GABRB3. Interacts with LHFPL4. Interacts with SHISA7; interaction leads to the regulation of GABA(A) receptor trafficking, channel deactivation kinetics and pharmacology. Palmitoylated by ZDHHC3/GODZ; required for the accumulation of GABA(A) receptors at the postsynaptic membrane of inhibitory GABAergic synapses.

The protein resides in the postsynaptic cell membrane. The protein localises to the cell membrane. Its subcellular location is the cell projection. It is found in the dendrite. It localises to the cytoplasmic vesicle membrane. The catalysed reaction is chloride(in) = chloride(out). Its activity is regulated as follows. Allosterically activated by benzodiazepines. Activated by pentobarbital. Potentiated by etomidate, propofol, pregnanolone. Inhibited by the antagonist bicuculline. Inhibited by zinc ions. Potentiated by histamine. Gamma subunit of the heteropentameric ligand-gated chloride channel gated by gamma-aminobutyric acid (GABA), a major inhibitory neurotransmitter in the brain. GABA-gated chloride channels, also named GABA(A) receptors (GABAAR), consist of five subunits arranged around a central pore and contain GABA active binding site(s) located at the alpha and beta subunit interface(s). When activated by GABA, GABAARs selectively allow the flow of chloride anions across the cell membrane down their electrochemical gradient. Gamma-2/GABRG2-containing GABAARs are found at both synaptic and extrasynaptic sites. Chloride influx into the postsynaptic neuron following GABAAR opening decreases the neuron ability to generate a new action potential, thereby reducing nerve transmission. GABAARs containing alpha-1 and beta-2 or -3 subunits exhibit synaptogenic activity; the gamma-2 subunit being necessary but not sufficient to induce rapid synaptic contacts formation. Extrasynaptic gamma-2-containing receptors contribute to the tonic GABAergic inhibition. GABAARs function also as histamine receptor where histamine binds at the interface of two neighboring beta subunits and potentiates GABA response in a gamma-2 subunit-controlled manner. The protein is Gamma-aminobutyric acid receptor subunit gamma-2 of Homo sapiens (Human).